The primary structure comprises 363 residues: F-box protein At3g44326 (363 aa).

A disordered region spans residues 1-23; that stretch reads MLSSSSSSTVEQPSRGGSPGINA. Positions 27 to 66 constitute an F-box domain; that stretch reads DVLRSNILTRLDGSSLAALSCTCSNLNSFCSDESLWRQQC.

This chain is F-box protein At3g44326, found in Arabidopsis thaliana (Mouse-ear cress).